Consider the following 213-residue polypeptide: FMN-dependent NADH:quinone oxidoreductase 1 (213 aa).

Ser-18–Ser-20 contacts FMN.

It belongs to the azoreductase type 1 family. As to quaternary structure, homodimer. FMN is required as a cofactor.

It catalyses the reaction 2 a quinone + NADH + H(+) = 2 a 1,4-benzosemiquinone + NAD(+). The enzyme catalyses N,N-dimethyl-1,4-phenylenediamine + anthranilate + 2 NAD(+) = 2-(4-dimethylaminophenyl)diazenylbenzoate + 2 NADH + 2 H(+). Its function is as follows. Quinone reductase that provides resistance to thiol-specific stress caused by electrophilic quinones. Functionally, also exhibits azoreductase activity. Catalyzes the reductive cleavage of the azo bond in aromatic azo compounds to the corresponding amines. In Bacillus cereus (strain ZK / E33L), this protein is FMN-dependent NADH:quinone oxidoreductase 1.